The sequence spans 287 residues: Troponin T, cardiac muscle (287 aa).

Composition is skewed to acidic residues over residues 1-31 (MSDVEETVDEYEEQEEAAVEEHEESVEEEAG) and 44-59 (EDGEEEEGREAEDGPV). 2 disordered regions span residues 1 to 85 (MSDV…GERV) and 124 to 208 (KDRI…EKKK). Ser2 is subject to N-acetylserine. Phosphoserine; by CK2 is present on Ser2. Residues 66-79 (APGPFMPNLVPPKI) are compositionally biased toward pro residues. Basic and acidic residues-rich tracts occupy residues 124-173 (KDRI…DEAR) and 192-208 (QAERKSGKRQTEREKKK). Position 197 is a phosphoserine; by PKC/PRKCA (Ser197). Thr202 is subject to Phosphothreonine; by PKC/PRKCA and RAF1. Thr283 is modified (phosphothreonine; by PKC/PRKCA).

Belongs to the troponin T family. Post-translationally, phosphorylation at Thr-202 by PRKCA induces significant reduction in myofilament calcium sensitivity and actomyosin ATPase activity.

Troponin T is the tropomyosin-binding subunit of troponin, the thin filament regulatory complex which confers calcium-sensitivity to striated muscle actomyosin ATPase activity. The polypeptide is Troponin T, cardiac muscle (TNNT2) (Ovis aries (Sheep)).